The chain runs to 123 residues: Small ribosomal subunit protein uS13 (123 aa).

The interval G96–K123 is disordered.

Belongs to the universal ribosomal protein uS13 family. As to quaternary structure, part of the 30S ribosomal subunit. Forms a loose heterodimer with protein S19. Forms two bridges to the 50S subunit in the 70S ribosome.

Its function is as follows. Located at the top of the head of the 30S subunit, it contacts several helices of the 16S rRNA. In the 70S ribosome it contacts the 23S rRNA (bridge B1a) and protein L5 of the 50S subunit (bridge B1b), connecting the 2 subunits; these bridges are implicated in subunit movement. Contacts the tRNAs in the A and P-sites. The chain is Small ribosomal subunit protein uS13 from Nocardia farcinica (strain IFM 10152).